The chain runs to 292 residues: 4-hydroxy-tetrahydrodipicolinate synthase (292 aa).

Residue Thr45 coordinates pyruvate. Tyr133 acts as the Proton donor/acceptor in catalysis. The Schiff-base intermediate with substrate role is filled by Lys161. Ile203 is a binding site for pyruvate.

This sequence belongs to the DapA family. In terms of assembly, homotetramer; dimer of dimers.

Its subcellular location is the cytoplasm. The catalysed reaction is L-aspartate 4-semialdehyde + pyruvate = (2S,4S)-4-hydroxy-2,3,4,5-tetrahydrodipicolinate + H2O + H(+). It participates in amino-acid biosynthesis; L-lysine biosynthesis via DAP pathway; (S)-tetrahydrodipicolinate from L-aspartate: step 3/4. Functionally, catalyzes the condensation of (S)-aspartate-beta-semialdehyde [(S)-ASA] and pyruvate to 4-hydroxy-tetrahydrodipicolinate (HTPA). The polypeptide is 4-hydroxy-tetrahydrodipicolinate synthase (Salmonella arizonae (strain ATCC BAA-731 / CDC346-86 / RSK2980)).